The chain runs to 305 residues: Porphobilinogen deaminase (305 aa).

Cys243 carries the S-(dipyrrolylmethanemethyl)cysteine modification.

Belongs to the HMBS family. Monomer. It depends on dipyrromethane as a cofactor.

The enzyme catalyses 4 porphobilinogen + H2O = hydroxymethylbilane + 4 NH4(+). It participates in porphyrin-containing compound metabolism; protoporphyrin-IX biosynthesis; coproporphyrinogen-III from 5-aminolevulinate: step 2/4. Tetrapolymerization of the monopyrrole PBG into the hydroxymethylbilane pre-uroporphyrinogen in several discrete steps. The sequence is that of Porphobilinogen deaminase from Limosilactobacillus reuteri (strain DSM 20016) (Lactobacillus reuteri).